Consider the following 142-residue polypeptide: Hemoglobin subunit beta-2 (142 aa).

Residues 2–142 form the Globin domain; the sequence is SLTDEEKHLI…VTEALSCQYH (141 aa). H59 and H88 together coordinate heme b.

It belongs to the globin family. In terms of assembly, heterotetramer of two alpha chains and two beta chains. Red blood cells.

Its function is as follows. Involved in oxygen transport from the lung to the various peripheral tissues. The sequence is that of Hemoglobin subunit beta-2 (HBB2) from Torpedo marmorata (Marbled electric ray).